The sequence spans 348 residues: MGSESESVCVTGASGFIGSWLVMRLLEHGYTVRATVRDPTNQKKVKHLLDLPKAETHLTLWKADLADEGSFDEAIQGCSGVFHVATPMDFESKDPENEVIKPTINGLLDILKACQKAKTVRKLVFTSSAGTVNVEEHQKPVYDESNWSDVEFCRSVKMTGWMYFVSKTLAEQAAWKYAKENNIDFITIIPTLVIGPFLMPSMPPSLITGLSPILRNESHYGIIKQGQYVHLDDLCLSHIYLYEHPKAEGRYICSSHDATIHELVKMLREKYPEYNIPTKFKGIDDNLEPVHFSSKKLREIGFEFKYSLEDMFVGAVDACRAKGLIPIPIPAEKTEAAEESNLVDVKVG.

K44 and Y163 together coordinate NADP(+).

It belongs to the NAD(P)-dependent epimerase/dehydratase family. Dihydroflavonol-4-reductase subfamily.

It carries out the reaction a (2R,3S,4S)-leucoanthocyanidin + NADP(+) = a (2R,3R)-dihydroflavonol + NADPH + H(+). The enzyme catalyses (2S)-flavan-4-ol + NADP(+) = (2S)-flavanone + NADPH + H(+). Functionally, bifunctional enzyme involved in flavonoid metabolism. May use dihydroquercetin, dihydrokaempferol, eriodictyol, garbanzol (5-deoxydihydrokaempferol), dihydrofisetin (5-deoxydihydroquercetin), naringenin to a low extent (10%), but not 5-deoxynaringenin or butin (5-deoxyeriodictyol) as substrate. This is Bifunctional dihydroflavonol 4-reductase/flavanone 4-reductase (DFR) from Malus domestica (Apple).